The following is a 445-amino-acid chain: tRNA modification GTPase MnmE (445 aa).

(6S)-5-formyl-5,6,7,8-tetrahydrofolate-binding residues include Arg-20, Glu-79, and Lys-119. One can recognise a TrmE-type G domain in the interval Gly-215 to Glu-371. K(+) is bound at residue Asn-225. Residues Asn-225–Ser-230, Ser-244–Thr-250, and Asp-269–Gly-272 each bind GTP. Ser-229 provides a ligand contact to Mg(2+). K(+) is bound by residues Ser-244, Ile-246, and Thr-249. Thr-250 contributes to the Mg(2+) binding site. Lys-445 lines the (6S)-5-formyl-5,6,7,8-tetrahydrofolate pocket.

It belongs to the TRAFAC class TrmE-Era-EngA-EngB-Septin-like GTPase superfamily. TrmE GTPase family. As to quaternary structure, homodimer. Heterotetramer of two MnmE and two MnmG subunits. K(+) is required as a cofactor.

It localises to the cytoplasm. Its function is as follows. Exhibits a very high intrinsic GTPase hydrolysis rate. Involved in the addition of a carboxymethylaminomethyl (cmnm) group at the wobble position (U34) of certain tRNAs, forming tRNA-cmnm(5)s(2)U34. The protein is tRNA modification GTPase MnmE of Rickettsia typhi (strain ATCC VR-144 / Wilmington).